The sequence spans 36 residues: Photosystem I reaction center subunit VIII (36 aa).

A helical membrane pass occupies residues 7–29 (PSILVPLVGIIFPGISMALLFIY).

The protein belongs to the PsaI family.

Its subcellular location is the plastid. The protein resides in the chloroplast thylakoid membrane. May help in the organization of the PsaL subunit. The protein is Photosystem I reaction center subunit VIII of Gracilaria tenuistipitata var. liui (Red alga).